Consider the following 231-residue polypeptide: 2-C-methyl-D-erythritol 4-phosphate cytidylyltransferase (231 aa).

This sequence belongs to the IspD/TarI cytidylyltransferase family. IspD subfamily.

The catalysed reaction is 2-C-methyl-D-erythritol 4-phosphate + CTP + H(+) = 4-CDP-2-C-methyl-D-erythritol + diphosphate. The protein operates within isoprenoid biosynthesis; isopentenyl diphosphate biosynthesis via DXP pathway; isopentenyl diphosphate from 1-deoxy-D-xylulose 5-phosphate: step 2/6. Functionally, catalyzes the formation of 4-diphosphocytidyl-2-C-methyl-D-erythritol from CTP and 2-C-methyl-D-erythritol 4-phosphate (MEP). The chain is 2-C-methyl-D-erythritol 4-phosphate cytidylyltransferase from Clostridium kluyveri (strain NBRC 12016).